Here is a 95-residue protein sequence, read N- to C-terminus: High mobility group nucleosome-binding domain-containing protein 3 (95 aa).

3 stretches are compositionally biased toward basic and acidic residues: residues 1-25, 39-53, and 62-72; these read MPKRKSPENAEGKDGAKLTKQEPTR, PEPKPRKTSAKKEPG, and GKKEEKQEAGK. The tract at residues 1–95 is disordered; it reads MPKRKSPENA…EEVLSTNASH (95 aa). Ser6 is subject to Phosphoserine. Ser78 carries the post-translational modification Phosphoserine.

This sequence belongs to the HMGN family. As to quaternary structure, interacts with the ligand binding domain of the thyroid receptor (TR) (in vitro). Requires the presence of thyroid hormone for its interaction. Interacts with transcriptional regulator SEHBP. Interacts with nucleosomes.

The protein localises to the nucleus. Functionally, binds to nucleosomes, regulating chromatin structure and consequently, chromatin-dependent processes such as transcription, DNA replication and DNA repair. Affects both insulin and glucagon levels and modulates the expression of pancreatic genes involved in insulin secretion. Regulates the expression of the glucose transporter SLC2A2 by binding specifically to its promoter region and recruiting PDX1 and additional transcription factors. Regulates the expression of SLC6A9, a glycine transporter which regulates the glycine concentration in synaptic junctions in the central nervous system, by binding to its transcription start site. May play a role in ocular development and astrocyte function. This is High mobility group nucleosome-binding domain-containing protein 3 (Hmgn3) from Rattus norvegicus (Rat).